A 527-amino-acid polypeptide reads, in one-letter code: FHA domain-containing protein FhaA (527 aa).

A Phosphothreonine modification is found at T116. The segment at 119-426 is disordered; that stretch reads FRARGTVNPD…APGGYSGYGQ (308 aa). Over residues 170–188 the composition is skewed to basic and acidic residues; it reads RPDEYYDDRYARPQEDPRG. Composition is skewed to low complexity over residues 199 to 209 and 256 to 266; these read RGGYPPETGGY and YQDQGRGYPDQ. The segment covering 271–283 has biased composition (pro residues); that stretch reads YPPPYEQRPPVSP. The segment covering 284 to 299 has biased composition (low complexity); the sequence is GPAAGYGAPGYDQGYR. The segment covering 300 to 322 has biased composition (gly residues); that stretch reads QSGGYGPSPGGGQPGYGGYGEYG. Over residues 345 to 366 the composition is skewed to low complexity; the sequence is RPAYPDQGGYDQGYQQGATTYG. One can recognise an FHA domain in the interval 455-504; the sequence is NIIGRGQDAQFRLPDTGVSRRHLEIRWDGQVALLADLNSTNGTTVNNAPV.

Interacts with (phosphorylated) MviN and (phosphorylated) PknB via the FHA domain. Binds to the PknB juxtamembrane domain with an affinity that is modulated by the degree and the pattern of phosphorylation of this juxtamembrane domain. Phosphorylated by PknB.

Its subcellular location is the cytoplasm. Regulates cell growth and peptidoglycan synthesis by binding to MviN. May inhibit the late stages of peptidoglycan synthesis. The polypeptide is FHA domain-containing protein FhaA (fhaA) (Mycobacterium tuberculosis (strain ATCC 25618 / H37Rv)).